The sequence spans 389 residues: 26S proteasome regulatory subunit 10B (389 aa).

At Lys72 the chain carries N6-acetyllysine. 174-181 (GPPGTGKT) contributes to the ATP binding site. Position 206 is an N6-acetyllysine (Lys206). Residue Ser244 is modified to Phosphoserine.

Belongs to the AAA ATPase family. Component of the 19S proteasome regulatory particle complex. The 26S proteasome consists of a 20S core particle (CP) and two 19S regulatory subunits (RP). The regulatory particle is made of a lid composed of 9 subunits, a base containing 6 ATPases including PSMC6 and few additional components. Interacts with PAAF1.

The protein localises to the cytoplasm. Its subcellular location is the nucleus. Component of the 26S proteasome, a multiprotein complex involved in the ATP-dependent degradation of ubiquitinated proteins. This complex plays a key role in the maintenance of protein homeostasis by removing misfolded or damaged proteins, which could impair cellular functions, and by removing proteins whose functions are no longer required. Therefore, the proteasome participates in numerous cellular processes, including cell cycle progression, apoptosis, or DNA damage repair. PSMC6 belongs to the heterohexameric ring of AAA (ATPases associated with diverse cellular activities) proteins that unfolds ubiquitinated target proteins that are concurrently translocated into a proteolytic chamber and degraded into peptides. In Bos taurus (Bovine), this protein is 26S proteasome regulatory subunit 10B (PSMC6).